The sequence spans 2009 residues: Protein Daple (2009 aa).

The 121-residue stretch at 11 to 131 (LFLQSPLVTW…KVLLLVLGCA (121 aa)) folds into the Calponin-homology (CH) domain. Residues 221-251 (QTQQPPSPGKFSSPDSTPSPTSSLSSEDKQH) form a disordered region. A phosphoserine mark is found at Ser-227 and Ser-239. Residues 232–245 (SSPDSTPSPTSSLS) show a composition bias toward low complexity. Coiled-coil stretches lie at residues 247–425 (EDKQ…QKQS) and 456–1008 (ELNE…TQEG). A Phosphoserine modification is found at Ser-486. Residues 1002–1036 (LRQTQEGGDKAQNALKRPPGKVTSHQEKEAWEPSH) form a disordered region. Over residues 1025–1036 (SHQEKEAWEPSH) the composition is skewed to basic and acidic residues. Positions 1190–1384 (HRNLELEHKE…LEEKIMDQYK (195 aa)) form a coiled coil. A compositionally biased stretch (basic and acidic residues) spans 1410–1419 (KEGSRERLKS). Disordered regions lie at residues 1410–1716 (KEGS…GAKM) and 1757–1787 (GMPSRQVQPPQSLSLGRPRQTTMTQNCHMPV). The segment covering 1430-1439 (PSDPASPSPS) has biased composition (low complexity). A Phosphoserine modification is found at Ser-1435. Polar residues predominate over residues 1440–1449 (QALRSQTENP). Composition is skewed to low complexity over residues 1510 to 1524 (TFSTSATTAALSSST) and 1562 to 1581 (NSLESSRNASSNSSPLSLKG). Ser-1592 bears the Phosphoserine mark. Positions 1652-1683 (HSASPSSEMVTLEEFLEESNRGGSPTHDTPSC) match the GBA motif. Residues 1681–1697 (PSCRDDLLSDYFRKAHD) show a composition bias toward basic and acidic residues. Over residues 1761–1783 (RQVQPPQSLSLGRPRQTTMTQNC) the composition is skewed to polar residues. Ser-1798 carries the phosphoserine modification. Residues 1808-2009 (SGPEACRPES…QTVWYEYGCV (202 aa)) form a disordered region. The segment covering 1866-1883 (RPLDTRRFSLAPPKEERL) has biased composition (basic and acidic residues). Polar residues predominate over residues 1898–1911 (GCSSGSNPQIQHFS). Gly residues predominate over residues 1943-1954 (TSEGDGGPGHGY). The span at 1981 to 1991 (SQGSSSKSTPA) shows a compositional bias: polar residues. The PDZ-binding signature appears at 2006-2009 (YGCV). Positions 2007 to 2009 (GCV) are DVL1-binding.

Belongs to the CCDC88 family. Homooligomer. Interacts with DVL1 (via PDZ domain); dissociates following initiation of non-canonical Wnt signaling. Interacts (via C-terminus) with ligand-activated Wnt receptor FZD7; competes with DVL1 for binding to FZD7 and displaces DVL1 from ligand-activated FZD7. Interacts (via GBA motif) with guanine nucleotide-binding protein G(i) alpha subunits GNAI1, GNAI2 and GNAI3 (inactive GDP-bound form); interacts with higher affinity with GNAI1 and GNAI3 than with GNAI2 and interaction leads to G(i) alpha subunit activation. Does not interact with GNAO1.

It is found in the cytoplasm. Its subcellular location is the cell junction. Required for activation of guanine nucleotide-binding proteins (G-proteins) during non-canonical Wnt signaling. Binds to ligand-activated Wnt receptor FZD7, displacing DVL1 from the FZD7 receptor and leading to inhibition of canonical Wnt signaling. Acts as a non-receptor guanine nucleotide exchange factor by also binding to guanine nucleotide-binding protein G(i) alpha (Gi-alpha) subunits, leading to their activation. Binding to Gi-alpha subunits displaces the beta and gamma subunits from the heterotrimeric G-protein complex, triggering non-canonical Wnt responses such as activation of RAC1 and PI3K-AKT signaling. Promotes apical constriction of cells via ARHGEF18. The chain is Protein Daple (Ccdc88c) from Mus musculus (Mouse).